A 203-amino-acid chain; its full sequence is SOSS complex subunit B1 (203 aa).

A DNA-binding region (OB) is located at residues 22-92 (IVLETGRVTK…TLYTGRGGDL (71 aa)). The disordered stretch occupies residues 111-203 (PNPEYIAQQS…GKEPRRTGKR (93 aa)). A compositionally biased stretch (polar residues) spans 117-128 (AQQSQNKQAQAE). The segment covering 129–140 (SGTGTNSHNSSS) has biased composition (low complexity). Positions 149-182 (ENGNGSNSSGPPTHQSTAPTHSTSGRITRSQPNH) are enriched in polar residues.

It belongs to the SOSS-B family. SOSS-B1 subfamily. Component of the SOSS complex, composed of soss-b (soss-b1/nabp2 or soss-b2/nabp1), soss-a/ints3 and soss-c/inip. SOSS complexes containing soss-b1/nabp2 are more abundant than complexes containing soss-b2/nabp1.

It localises to the nucleus. Functionally, component of the SOSS complex, a multiprotein complex that functions downstream of the MRN complex to promote DNA repair and G2/M checkpoint. In the SOSS complex, acts as a sensor of single-stranded DNA that binds to single-stranded DNA. The SOSS complex associates with DNA lesions and influences diverse endpoints in the cellular DNA damage response including cell-cycle checkpoint activation, recombinational repair and maintenance of genomic stability. Required for efficient homologous recombination-dependent repair of double-strand breaks (DSBs). This is SOSS complex subunit B1 (nabp2) from Xenopus tropicalis (Western clawed frog).